The chain runs to 362 residues: Chorismate synthase (362 aa).

2 residues coordinate NADP(+): arginine 48 and arginine 54. FMN contacts are provided by residues 125-127, 241-242, glycine 286, 301-305, and arginine 327; these read RSS, NA, and KPTSS.

Belongs to the chorismate synthase family. In terms of assembly, homotetramer. FMNH2 serves as cofactor.

The enzyme catalyses 5-O-(1-carboxyvinyl)-3-phosphoshikimate = chorismate + phosphate. It participates in metabolic intermediate biosynthesis; chorismate biosynthesis; chorismate from D-erythrose 4-phosphate and phosphoenolpyruvate: step 7/7. Catalyzes the anti-1,4-elimination of the C-3 phosphate and the C-6 proR hydrogen from 5-enolpyruvylshikimate-3-phosphate (EPSP) to yield chorismate, which is the branch point compound that serves as the starting substrate for the three terminal pathways of aromatic amino acid biosynthesis. This reaction introduces a second double bond into the aromatic ring system. This chain is Chorismate synthase, found in Paramagnetospirillum magneticum (strain ATCC 700264 / AMB-1) (Magnetospirillum magneticum).